The primary structure comprises 418 residues: LL-diaminopimelate aminotransferase (418 aa).

Positions 25 and 52 each coordinate substrate. Pyridoxal 5'-phosphate-binding positions include Y78, 115 to 116 (SK), Y140, N190, Y221, and 248 to 250 (SFS). Substrate-binding residues include K116, Y140, and N190. K251 is subject to N6-(pyridoxal phosphate)lysine. R259 serves as a coordination point for pyridoxal 5'-phosphate.

This sequence belongs to the class-I pyridoxal-phosphate-dependent aminotransferase family. Homodimer. It depends on pyridoxal 5'-phosphate as a cofactor.

The protein resides in the cytoplasm. The enzyme catalyses (2S,6S)-2,6-diaminopimelate + 2-oxoglutarate = (S)-2,3,4,5-tetrahydrodipicolinate + L-glutamate + H2O + H(+). The protein operates within amino-acid biosynthesis; L-lysine biosynthesis via DAP pathway; LL-2,6-diaminopimelate from (S)-tetrahydrodipicolinate (aminotransferase route): step 1/1. Functionally, involved in the synthesis of meso-diaminopimelate (m-DAP or DL-DAP), required for both lysine and peptidoglycan biosynthesis. Catalyzes the direct conversion of tetrahydrodipicolinate to LL-diaminopimelate, a reaction that requires three enzymes in E.coli. This Methanocaldococcus jannaschii (strain ATCC 43067 / DSM 2661 / JAL-1 / JCM 10045 / NBRC 100440) (Methanococcus jannaschii) protein is LL-diaminopimelate aminotransferase (dapL).